Here is a 236-residue protein sequence, read N- to C-terminus: Purine nucleoside phosphorylase DeoD-type 2 (236 aa).

Residue His-5 participates in a purine D-ribonucleoside binding. Phosphate-binding positions include Gly-21, Arg-25, Arg-44, and 88-91 (RVGS). A purine D-ribonucleoside is bound by residues 180 to 182 (DME) and 204 to 205 (SD). Asp-205 (proton donor) is an active-site residue.

Belongs to the PNP/UDP phosphorylase family. In terms of assembly, homohexamer; trimer of homodimers.

It catalyses the reaction a purine D-ribonucleoside + phosphate = a purine nucleobase + alpha-D-ribose 1-phosphate. The catalysed reaction is a purine 2'-deoxy-D-ribonucleoside + phosphate = a purine nucleobase + 2-deoxy-alpha-D-ribose 1-phosphate. In terms of biological role, catalyzes the reversible phosphorolytic breakdown of the N-glycosidic bond in the beta-(deoxy)ribonucleoside molecules, with the formation of the corresponding free purine bases and pentose-1-phosphate. This is Purine nucleoside phosphorylase DeoD-type 2 from Vibrio parahaemolyticus serotype O3:K6 (strain RIMD 2210633).